A 145-amino-acid chain; its full sequence is D-aminoacyl-tRNA deacylase (145 aa).

The short motif at 137–138 is the Gly-cisPro motif, important for rejection of L-amino acids element; sequence GP.

Belongs to the DTD family. Homodimer.

It is found in the cytoplasm. The enzyme catalyses glycyl-tRNA(Ala) + H2O = tRNA(Ala) + glycine + H(+). The catalysed reaction is a D-aminoacyl-tRNA + H2O = a tRNA + a D-alpha-amino acid + H(+). Its function is as follows. An aminoacyl-tRNA editing enzyme that deacylates mischarged D-aminoacyl-tRNAs. Also deacylates mischarged glycyl-tRNA(Ala), protecting cells against glycine mischarging by AlaRS. Acts via tRNA-based rather than protein-based catalysis; rejects L-amino acids rather than detecting D-amino acids in the active site. By recycling D-aminoacyl-tRNA to D-amino acids and free tRNA molecules, this enzyme counteracts the toxicity associated with the formation of D-aminoacyl-tRNA entities in vivo and helps enforce protein L-homochirality. The polypeptide is D-aminoacyl-tRNA deacylase (Shigella dysenteriae serotype 1 (strain Sd197)).